Here is a 617-residue protein sequence, read N- to C-terminus: Chaperone protein DnaK (617 aa).

Threonine 175 is modified (phosphothreonine; by autocatalysis). Residues alanine 578–alanine 592 are compositionally biased toward low complexity. Positions alanine 578–lysine 617 are disordered. A compositionally biased stretch (basic and acidic residues) spans glycine 600–lysine 617.

Belongs to the heat shock protein 70 family.

Acts as a chaperone. The sequence is that of Chaperone protein DnaK from Clostridium novyi (strain NT).